The sequence spans 209 residues: Regulator of G-protein signaling 1 (209 aa).

Residues 18 to 42 (FFSASPKDSKEPSHSLLDDNKQKKR) are disordered. The segment covering 24-38 (KDSKEPSHSLLDDNK) has biased composition (basic and acidic residues). Positions 85–200 (SLEKLLANQM…LKSNIYLNLL (116 aa)) constitute an RGS domain.

Interacts with GNAI1 and GNAQ. As to expression, expressed in multiple tissues.

It is found in the cell membrane. It localises to the cytoplasm. Its subcellular location is the cytosol. In terms of biological role, regulates G protein-coupled receptor signaling cascades, including signaling downstream of the N-formylpeptide chemoattractant receptors and leukotriene receptors. Inhibits B cell chemotaxis toward CXCL12. Inhibits signal transduction by increasing the GTPase activity of G protein alpha subunits, thereby driving them into their inactive GDP-bound form. The protein is Regulator of G-protein signaling 1 (Rgs1) of Rattus norvegicus (Rat).